We begin with the raw amino-acid sequence, 422 residues long: DNA-directed RNA polymerase III subunit RPC4 (422 aa).

Disordered stretches follow at residues 1-80, 115-190, 219-244, and 318-350; these read MSSN…GQQR, KSEG…DDEE, IQEA…GTGL, and RPAV…TKDA. The Nuclear localization signal motif lies at 25–29; the sequence is KPSLK. Over residues 28 to 37 the composition is skewed to basic residues; that stretch reads LKFKPKAVAR. The span at 38–64 shows a compositional bias: basic and acidic residues; the sequence is KSKEEREAAASKVKLEEESKRGNDKKH. A phosphoserine mark is found at Ser137 and Ser138. A compositionally biased stretch (acidic residues) spans 138 to 148; the sequence is SENEAEDDDNE. Residues 160-170 are compositionally biased toward basic and acidic residues; it reads MGKEFEARNLI. Phosphoserine occurs at positions 178, 182, and 224. The span at 219–229 shows a compositional bias: basic and acidic residues; sequence IQEALSEKPTR. Thr228 and Thr232 each carry phosphothreonine.

It belongs to the eukaryotic RPC4/POLR3D RNA polymerase subunit family. As to quaternary structure, component of the RNA polymerase III (Pol III) complex consisting of 17 subunits. Interacts with RPC37/RPC5. RPC53/RPC4, RPC37/RPC5 and RPC11/RPC10 probably form a Pol III subcomplex.

Its subcellular location is the nucleus. DNA-dependent RNA polymerase catalyzes the transcription of DNA into RNA using the four ribonucleoside triphosphates as substrates. Specific peripheric component of RNA polymerase III which synthesizes small RNAs, such as 5S rRNA and tRNAs. Essential for tRNA synthesis. The RPC53/RPC4-RPC37/RPC5 subcomplex is required for terminator recognition and reinitiation. The sequence is that of DNA-directed RNA polymerase III subunit RPC4 (RPC53) from Saccharomyces cerevisiae (strain ATCC 204508 / S288c) (Baker's yeast).